We begin with the raw amino-acid sequence, 121 residues long: Small ribosomal subunit protein bS6m (121 aa).

Belongs to the bacterial ribosomal protein bS6 family. Component of the mitochondrial ribosome small subunit (28S) which comprises a 12S rRNA and about 30 distinct proteins.

It localises to the mitochondrion. The protein is Small ribosomal subunit protein bS6m (MRPS6) of Gallus gallus (Chicken).